We begin with the raw amino-acid sequence, 318 residues long: Ribosomal RNA small subunit methyltransferase H (318 aa).

Residues Gly37–His39, Asp57, Phe83, Asp104, and Gln111 contribute to the S-adenosyl-L-methionine site.

Belongs to the methyltransferase superfamily. RsmH family.

The protein resides in the cytoplasm. It carries out the reaction cytidine(1402) in 16S rRNA + S-adenosyl-L-methionine = N(4)-methylcytidine(1402) in 16S rRNA + S-adenosyl-L-homocysteine + H(+). Functionally, specifically methylates the N4 position of cytidine in position 1402 (C1402) of 16S rRNA. The protein is Ribosomal RNA small subunit methyltransferase H of Neisseria gonorrhoeae (strain NCCP11945).